The primary structure comprises 207 residues: ATP-dependent Clp protease proteolytic subunit (207 aa).

Residue serine 111 is the Nucleophile of the active site. Histidine 136 is a catalytic residue.

It belongs to the peptidase S14 family. As to quaternary structure, fourteen ClpP subunits assemble into 2 heptameric rings which stack back to back to give a disk-like structure with a central cavity, resembling the structure of eukaryotic proteasomes.

It localises to the cytoplasm. It catalyses the reaction Hydrolysis of proteins to small peptides in the presence of ATP and magnesium. alpha-casein is the usual test substrate. In the absence of ATP, only oligopeptides shorter than five residues are hydrolyzed (such as succinyl-Leu-Tyr-|-NHMec, and Leu-Tyr-Leu-|-Tyr-Trp, in which cleavage of the -Tyr-|-Leu- and -Tyr-|-Trp bonds also occurs).. In terms of biological role, cleaves peptides in various proteins in a process that requires ATP hydrolysis. Has a chymotrypsin-like activity. Plays a major role in the degradation of misfolded proteins. The polypeptide is ATP-dependent Clp protease proteolytic subunit (Yersinia pseudotuberculosis serotype O:1b (strain IP 31758)).